The chain runs to 118 residues: Transcriptional regulator WhiB4 (118 aa).

Residues 36–92 enclose the 4Fe-4S Wbl-type domain; sequence LCRTTDPDELFVRGAAQRKAAVICRHCPVMQECAADALDNKVEFGVWGGMTERQRRA. Residues Cys-37, Cys-59, Cys-62, and Cys-68 each contribute to the [4Fe-4S] cluster site. 2 cysteine pairs are disulfide-bonded: Cys-37–Cys-68 and Cys-59–Cys-62.

The protein belongs to the WhiB family. The cofactor is [4Fe-4S] cluster. Post-translationally, the Fe-S cluster can be nitrosylated by nitric oxide (NO). In terms of processing, upon Fe-S cluster removal intramolecular disulfide bonds are formed.

It is found in the cytoplasm. Its function is as follows. Acts as a transcriptional regulator. Probably redox-responsive. The apo- but not holo-form probably binds DNA. This is Transcriptional regulator WhiB4 (whiB4) from Mycobacterium tuberculosis (strain CDC 1551 / Oshkosh).